We begin with the raw amino-acid sequence, 291 residues long: 4-diphosphocytidyl-2-C-methyl-D-erythritol kinase (291 aa).

Residue Lys11 is part of the active site. ATP is bound at residue 94–104; sequence PAGSGLGGGSA. Asp136 is an active-site residue.

This sequence belongs to the GHMP kinase family. IspE subfamily.

It catalyses the reaction 4-CDP-2-C-methyl-D-erythritol + ATP = 4-CDP-2-C-methyl-D-erythritol 2-phosphate + ADP + H(+). It functions in the pathway isoprenoid biosynthesis; isopentenyl diphosphate biosynthesis via DXP pathway; isopentenyl diphosphate from 1-deoxy-D-xylulose 5-phosphate: step 3/6. Catalyzes the phosphorylation of the position 2 hydroxy group of 4-diphosphocytidyl-2C-methyl-D-erythritol. The polypeptide is 4-diphosphocytidyl-2-C-methyl-D-erythritol kinase (Treponema pallidum (strain Nichols)).